A 154-amino-acid chain; its full sequence is Ribonuclease H (154 aa).

Residues 1 to 142 form the RNase H type-1 domain; it reads MQKQIEIFTD…CDELAKKGAE (142 aa). Residues aspartate 10, glutamate 48, aspartate 70, and aspartate 134 each coordinate Mg(2+).

It belongs to the RNase H family. Monomer. Requires Mg(2+) as cofactor.

The protein resides in the cytoplasm. It carries out the reaction Endonucleolytic cleavage to 5'-phosphomonoester.. Functionally, endonuclease that specifically degrades the RNA of RNA-DNA hybrids. This Haemophilus influenzae (strain 86-028NP) protein is Ribonuclease H.